We begin with the raw amino-acid sequence, 282 residues long: Probable endonuclease 4 (282 aa).

Zn(2+) is bound by residues His-69, His-109, Glu-145, Asp-179, His-182, His-216, Asp-229, His-231, and Glu-261.

Belongs to the AP endonuclease 2 family. Zn(2+) serves as cofactor.

The enzyme catalyses Endonucleolytic cleavage to 5'-phosphooligonucleotide end-products.. Endonuclease IV plays a role in DNA repair. It cleaves phosphodiester bonds at apurinic or apyrimidinic (AP) sites, generating a 3'-hydroxyl group and a 5'-terminal sugar phosphate. The protein is Probable endonuclease 4 of Magnetococcus marinus (strain ATCC BAA-1437 / JCM 17883 / MC-1).